A 147-amino-acid polypeptide reads, in one-letter code: MDNKNPQKLITSELLANHRFNFAKDDKGGYDANEVDAFLDQLTKTLIHYEEMKNNEQELKNAYDKLFSDRDQILSRCAKLEADLNTFYENGYANKVLINRVQELEDKLEKLPDRYTEKLERIEKLLKKVIKHWTDGEDISNFEDEFF.

This is an uncharacterized protein from Mycoplasma genitalium (strain ATCC 33530 / DSM 19775 / NCTC 10195 / G37) (Mycoplasmoides genitalium).